Consider the following 232-residue polypeptide: Ribonuclease 3 (232 aa).

The RNase III domain maps to 5–134 (QTVLKNHFAI…FLGALLLDKD (130 aa)). Residue Glu47 coordinates Mg(2+). The active site involves Asp51. Residues Asp120 and Glu123 each coordinate Mg(2+). The active site involves Glu123. Residues 160–229 (DYKTHLQELL…AKNAVEKGLD (70 aa)) enclose the DRBM domain.

Belongs to the ribonuclease III family. In terms of assembly, homodimer. Requires Mg(2+) as cofactor.

It localises to the cytoplasm. The catalysed reaction is Endonucleolytic cleavage to 5'-phosphomonoester.. Its function is as follows. Digests double-stranded RNA. Involved in the processing of primary rRNA transcript to yield the immediate precursors to the large and small rRNAs (23S and 16S). Processes some mRNAs, and tRNAs when they are encoded in the rRNA operon. Processes pre-crRNA and tracrRNA of type II CRISPR loci if present in the organism. The protein is Ribonuclease 3 of Streptococcus pneumoniae serotype 4 (strain ATCC BAA-334 / TIGR4).